Reading from the N-terminus, the 538-residue chain is Ribulokinase 1 (538 aa).

This sequence belongs to the ribulokinase family.

The catalysed reaction is D-ribulose + ATP = D-ribulose 5-phosphate + ADP + H(+). It catalyses the reaction L-ribulose + ATP = L-ribulose 5-phosphate + ADP + H(+). Its pathway is carbohydrate degradation; L-arabinose degradation via L-ribulose; D-xylulose 5-phosphate from L-arabinose (bacterial route): step 2/3. The protein is Ribulokinase 1 of Staphylococcus saprophyticus subsp. saprophyticus (strain ATCC 15305 / DSM 20229 / NCIMB 8711 / NCTC 7292 / S-41).